An 864-amino-acid polypeptide reads, in one-letter code: MHERYVPADVEAAAQSDWRAADAYRSKEDANRKKFYCVSMLPYPSGKLHMGHVRNYTINDVMYRYLRMNGYNTLMPMGWDAFGMPAENAAMANGVPPAQWTYENIAYMKKQMQAMGLAIDWSREVTTCKPDYYKWNQWLFLKMLEKGVAYKKTGTVNWDPVDQTVLANEQVIDGRGWRSGAFVEKREIPMYYMRITQYADELLNDLDGLGWPERVKVMQHNWIGKSFGVNFGFPYELDGEKKLLRVFTTRADTIMGVTFCAIAAEHPLAARLARDKPALQAFIDECKRGGVAEADIATMEKKGVATGFSVSHPLTGEPVEVWIGNYVLMSYGEGAVMGVPAHDERDFAFAKKYGLPIRQVIAVEGETYSTDAWQEWYGDKTRAVCVNSGKYDGLAYDAAVDAIAAELKAGGLGDKQITYRLRDWGISRQRYWGTPIPIIHCPSCGDVPVPEQDLPVVLPEDLVPDGTGNPLAKSDAFLNCTCPKCGAVAKRETDTMDTFVDSAWYFSRYAAPDAQTMVDARTDYWMPMDQYIGGIEHAILHLLYSRFWAKVMRDLGLVAFGEPAKNLLTQGMVLNETFYREDAAGKKTWYNPADVTVSFDDKGRPVGAVLKSDGQPVELGGIEKMSKSKNNGVDPQMLIDHYGADTARLFTMFAAPPEQQLEWSGAGVDGASRFLRRVWAFGFANREALAVRAPFDAAQLAEAGKTLRREIHGVLKQADFDYQRLQYNTVVSAAMKMLNAIEGAKGATPAVLRETYGVLLRVLYPVVPHVTFELWKVLGYADEFGPLLDAPWPKVDEAALEQAEIELVLQVNGKVRGALKVAKDASREAIEAAAVADGMFAKFAEGRPAKKIIVVPGRLVNVVV.

The short motif at 42–52 is the 'HIGH' region element; that stretch reads PYPSGKLHMGH. The short motif at 624–628 is the 'KMSKS' region element; that stretch reads KMSKS. Residue K627 coordinates ATP.

This sequence belongs to the class-I aminoacyl-tRNA synthetase family.

It is found in the cytoplasm. It carries out the reaction tRNA(Leu) + L-leucine + ATP = L-leucyl-tRNA(Leu) + AMP + diphosphate. The protein is Leucine--tRNA ligase of Burkholderia mallei (strain ATCC 23344).